The chain runs to 117 residues: Large ribosomal subunit protein bL20 (117 aa).

This sequence belongs to the bacterial ribosomal protein bL20 family.

In terms of biological role, binds directly to 23S ribosomal RNA and is necessary for the in vitro assembly process of the 50S ribosomal subunit. It is not involved in the protein synthesizing functions of that subunit. The chain is Large ribosomal subunit protein bL20 from Rickettsia canadensis (strain McKiel).